An 814-amino-acid polypeptide reads, in one-letter code: Phenylalanine--tRNA ligase beta subunit (814 aa).

The tRNA-binding domain occupies 39 to 153; the sequence is SKNVNGVVLG…LKHELGTPVS (115 aa). A B5 domain is found at 414 to 500; sequence NEDIFIKLRR…RLIGYDRFDL (87 aa). Positions 478, 484, 487, and 488 each coordinate Mg(2+). In terms of domain architecture, FDX-ACB spans 720–813; the sequence is PIVPKIERDI…IEKSFQTKLR (94 aa).

The protein belongs to the phenylalanyl-tRNA synthetase beta subunit family. Type 1 subfamily. In terms of assembly, tetramer of two alpha and two beta subunits. Mg(2+) serves as cofactor.

Its subcellular location is the cytoplasm. The catalysed reaction is tRNA(Phe) + L-phenylalanine + ATP = L-phenylalanyl-tRNA(Phe) + AMP + diphosphate + H(+). In Prochlorococcus marinus (strain MIT 9312), this protein is Phenylalanine--tRNA ligase beta subunit.